Consider the following 53-residue polypeptide: MSPAQRRILLYILSFIFVIGAVVYFVKSDYLFTLIFIAIAILFGMRARKADSR.

2 helical membrane-spanning segments follow: residues 8-28 (ILLY…FVKS) and 30-50 (YLFT…ARKA).

It localises to the cell membrane. In terms of biological role, involved in the production of the bacteriocin subtilosin. Required for maximal production and for optimal immunity to subtilosin. This is Antilisterial bacteriocin subtilosin biosynthesis protein AlbB (albB) from Bacillus subtilis (strain 168).